A 111-amino-acid polypeptide reads, in one-letter code: Cystatin (111 aa).

Residues 3 to 103 (GGLSPRDVTD…CRFEVWSRPW (101 aa)) enclose the Cystatin domain. Residues 47–51 (QVVSG) carry the Secondary area of contact motif. Cysteine 65 and cysteine 81 are joined by a disulfide.

This sequence belongs to the cystatin family. As to expression, expressed by the venom gland.

It is found in the secreted. Its function is as follows. Inhibits various C1 cysteine proteases including cathepsin L, papain and cathepsin B. This protein has no toxic activity and its function in the venom is unknown. It may play a role as housekeeping or regulatory protein. This is Cystatin from Bitis arietans (African puff adder).